Reading from the N-terminus, the 358-residue chain is GDSL esterase/lipase At2g30220 (358 aa).

Residues 1-22 (MYISKTIVFGLFVATLLVSCNA) form the signal peptide. Asparagine 25 is a glycosylation site (N-linked (GlcNAc...) asparagine). The active-site Nucleophile is the serine 40. N-linked (GlcNAc...) asparagine glycosylation is found at asparagine 102 and asparagine 324. Catalysis depends on residues aspartate 332 and histidine 335.

The protein belongs to the 'GDSL' lipolytic enzyme family.

The protein localises to the secreted. The sequence is that of GDSL esterase/lipase At2g30220 from Arabidopsis thaliana (Mouse-ear cress).